Here is a 144-residue protein sequence, read N- to C-terminus: Large ribosomal subunit protein uL16 (144 aa).

Belongs to the universal ribosomal protein uL16 family. Part of the 50S ribosomal subunit.

Functionally, binds 23S rRNA and is also seen to make contacts with the A and possibly P site tRNAs. The chain is Large ribosomal subunit protein uL16 from Caldanaerobacter subterraneus subsp. tengcongensis (strain DSM 15242 / JCM 11007 / NBRC 100824 / MB4) (Thermoanaerobacter tengcongensis).